The chain runs to 394 residues: S-adenosylmethionine synthase 2 (394 aa).

A Mg(2+)-binding site is contributed by Glu11. Position 17 (His17) interacts with ATP. Glu45 serves as a coordination point for K(+). Positions 58 and 101 each coordinate L-methionine. ATP-binding positions include 169-171, 237-240, Asp248, 254-255, Ala271, Lys275, and Lys279; these read DGK, SGRF, and RK. An L-methionine-binding site is contributed by Asp248. Position 279 (Lys279) interacts with L-methionine.

This sequence belongs to the AdoMet synthase family. As to quaternary structure, homotetramer. Mn(2+) is required as a cofactor. It depends on Mg(2+) as a cofactor. Requires Co(2+) as cofactor. K(+) serves as cofactor.

The protein resides in the cytoplasm. The enzyme catalyses L-methionine + ATP + H2O = S-adenosyl-L-methionine + phosphate + diphosphate. It functions in the pathway amino-acid biosynthesis; S-adenosyl-L-methionine biosynthesis; S-adenosyl-L-methionine from L-methionine: step 1/1. Functionally, catalyzes the formation of S-adenosylmethionine from methionine and ATP. The reaction comprises two steps that are both catalyzed by the same enzyme: formation of S-adenosylmethionine (AdoMet) and triphosphate, and subsequent hydrolysis of the triphosphate. The sequence is that of S-adenosylmethionine synthase 2 (SAM2) from Hordeum vulgare (Barley).